Consider the following 245-residue polypeptide: 1-(5-phosphoribosyl)-5-[(5-phosphoribosylamino)methylideneamino] imidazole-4-carboxamide isomerase (245 aa).

D7 serves as the catalytic Proton acceptor. Catalysis depends on D129, which acts as the Proton donor.

This sequence belongs to the HisA/HisF family.

It is found in the cytoplasm. It catalyses the reaction 1-(5-phospho-beta-D-ribosyl)-5-[(5-phospho-beta-D-ribosylamino)methylideneamino]imidazole-4-carboxamide = 5-[(5-phospho-1-deoxy-D-ribulos-1-ylimino)methylamino]-1-(5-phospho-beta-D-ribosyl)imidazole-4-carboxamide. The protein operates within amino-acid biosynthesis; L-histidine biosynthesis; L-histidine from 5-phospho-alpha-D-ribose 1-diphosphate: step 4/9. This Shewanella sp. (strain ANA-3) protein is 1-(5-phosphoribosyl)-5-[(5-phosphoribosylamino)methylideneamino] imidazole-4-carboxamide isomerase.